Consider the following 236-residue polypeptide: Sensory rhodopsin II (236 aa).

7 consecutive transmembrane segments (helical) span residues 4–24 (ITTW…VLAY), 38–58 (LLLI…ALGF), 73–93 (YVDW…LAGA), 101–121 (LVVL…TPSP), 122–142 (VSYA…YLLY), 167–187 (FVVV…AGVG), and 196–216 (LVVV…ALLA). Lys206 is modified (N6-(retinylidene)lysine).

The protein belongs to the archaeal/bacterial/fungal opsin family. The covalent binding of retinal to the apoprotein, bacterioopsin, generates bacteriorhodopsin.

The protein resides in the membrane. Functionally, mediates the photorepellent response. This Haloarcula marismortui (strain ATCC 43049 / DSM 3752 / JCM 8966 / VKM B-1809) (Halobacterium marismortui) protein is Sensory rhodopsin II (sop2).